We begin with the raw amino-acid sequence, 250 residues long: 3-deoxy-manno-octulosonate cytidylyltransferase (250 aa).

The protein belongs to the KdsB family.

It is found in the cytoplasm. It carries out the reaction 3-deoxy-alpha-D-manno-oct-2-ulosonate + CTP = CMP-3-deoxy-beta-D-manno-octulosonate + diphosphate. Its pathway is nucleotide-sugar biosynthesis; CMP-3-deoxy-D-manno-octulosonate biosynthesis; CMP-3-deoxy-D-manno-octulosonate from 3-deoxy-D-manno-octulosonate and CTP: step 1/1. It functions in the pathway bacterial outer membrane biogenesis; lipopolysaccharide biosynthesis. Its function is as follows. Activates KDO (a required 8-carbon sugar) for incorporation into bacterial lipopolysaccharide in Gram-negative bacteria. This Francisella tularensis subsp. tularensis (strain FSC 198) protein is 3-deoxy-manno-octulosonate cytidylyltransferase.